A 101-amino-acid chain; its full sequence is Interleukin-8 (101 aa).

The signal sequence occupies residues 1-22; that stretch reads MPSQLRVAVLAAFLLSAVLCEG. Cystine bridges form between Cys-34–Cys-61 and Cys-36–Cys-77.

It belongs to the intercrine alpha (chemokine CxC) family. In terms of assembly, homodimer. Interacts with TNFAIP6 (via Link domain); this interaction interferes with chemokine binding to glycosaminoglycans.

Its subcellular location is the secreted. Its function is as follows. Chemotactic factor that mediates inflammatory response by attracting neutrophils, basophils, and T-cells to clear pathogens and protect the host from infection. Also plays an important role in neutrophil activation. Released in response to an inflammatory stimulus, exerts its effect by binding to the G-protein-coupled receptors CXCR1 and CXCR2, primarily found in neutrophils, monocytes and endothelial cells. G-protein heterotrimer (alpha, beta, gamma subunits) constitutively binds to CXCR1/CXCR2 receptor and activation by IL8 leads to beta and gamma subunits release from Galpha (GNAI2 in neutrophils) and activation of several downstream signaling pathways including PI3K and MAPK pathways. This is Interleukin-8 (CXCL8) from Cavia porcellus (Guinea pig).